The following is a 903-amino-acid chain: E3 ubiquitin-protein ligase DDB_G0292642 (903 aa).

Disordered regions lie at residues 115–137, 167–236, 284–366, 415–487, and 549–576; these read FTLPPTTNNNNNNTTNVLESSSD, LLKR…VIGS, VNKT…NNLK, TPSL…TTEI, and DDSEEEEEEEEEEEGEESDSESSSGSEG. Low complexity-rich tracts occupy residues 120 to 130 and 178 to 216; these read TTNNNNNNTTN and TTTTTTTTTTANNNNTRRNRNNNNNNNNNANGANRTIDT. Over residues 217-232 the composition is skewed to acidic residues; sequence SSEDDDESISSSDDDI. Low complexity-rich tracts occupy residues 287–301 and 311–323; these read TSTTSTTTTTTTTTT and NRNNNNNNNNNNN. Residues 313 to 352 adopt a coiled-coil conformation; sequence NNNNNNNNNNNKRFEIESEEESETDISSEEEENNNNNNNN. Positions 329 to 345 are enriched in acidic residues; the sequence is ESEEESETDISSEEEEN. Over residues 346 to 364 the composition is skewed to low complexity; the sequence is NNNNNNNSNNNNNSNNNNN. Residues 415 to 427 show a composition bias toward polar residues; that stretch reads TPSLRLSSAHLPN. Over residues 428–443 the composition is skewed to low complexity; the sequence is TTTTTTTTTTTTTTTT. 2 stretches are compositionally biased toward acidic residues: residues 451–466 and 549–568; these read NDDDESSDSDSSDSEI and DDSEEEEEEEEEEEGEESDS. Residues 542–569 adopt a coiled-coil conformation; sequence AELVFEYDDSEEEEEEEEEEEGEESDSE. A TRIAD supradomain region spans residues 612–832; sequence EPVECKICYM…NEYPECFDRQ (221 aa). Residues C616, C619, C634, H636, C639, C642, C661, C666, C704, C709, C725, C728, C733, C736, H741, C746, C782, and C785 each contribute to the Zn(2+) site. The RING-type 1 zinc finger occupies 616-666; it reads CKICYMEYDQSNEVFTLECDHVYCFDCITEHLRILITEGRVLDISCPHPQC. Residues 683–746 form an IBR-type zinc finger; it reads NWLKYQKFSM…GEYSHEGAKC (64 aa). An RING-type 2; atypical zinc finger spans residues 782–811; that stretch reads CPTCKSHIEKHDGCNHMTCINCQHQFCWLC. Residue C795 is part of the active site. Zn(2+)-binding residues include C800, C803, C808, C811, H819, and C828. Residues 864 to 884 form a helical membrane-spanning segment; sequence TAAFTVGAPLLLIGGAVLLCV.

This sequence belongs to the RBR family. RNF14 subfamily.

The protein resides in the membrane. The enzyme catalyses [E2 ubiquitin-conjugating enzyme]-S-ubiquitinyl-L-cysteine + [acceptor protein]-L-lysine = [E2 ubiquitin-conjugating enzyme]-L-cysteine + [acceptor protein]-N(6)-ubiquitinyl-L-lysine.. Its pathway is protein modification; protein ubiquitination. Functionally, E3 ubiquitin-protein ligase. This Dictyostelium discoideum (Social amoeba) protein is E3 ubiquitin-protein ligase DDB_G0292642.